The sequence spans 337 residues: Putative tRNA (cytidine(32)/guanosine(34)-2'-O)-methyltransferase (337 aa).

5 residues coordinate S-adenosyl-L-methionine: G53, W55, D76, D92, and D117. The Proton acceptor role is filled by K157. Composition is skewed to basic and acidic residues over residues 304 to 318 (LKAE…KKTP) and 327 to 337 (ELEKAAEKFQL). Residues 304–337 (LKAELSRGKDQKKTPAENVPSVEELEKAAEKFQL) form a disordered region.

Belongs to the class I-like SAM-binding methyltransferase superfamily. RNA methyltransferase RlmE family. TRM7 subfamily.

It is found in the cytoplasm. The enzyme catalyses cytidine(32)/guanosine(34) in tRNA + 2 S-adenosyl-L-methionine = 2'-O-methylcytidine(32)/2'-O-methylguanosine(34) in tRNA + 2 S-adenosyl-L-homocysteine + 2 H(+). Its function is as follows. Methylates the 2'-O-ribose of nucleotides at positions 32 and 34 of the tRNA anticodon loop of substrate tRNAs. This Caenorhabditis elegans protein is Putative tRNA (cytidine(32)/guanosine(34)-2'-O)-methyltransferase.